The primary structure comprises 530 residues: Probable glycerol-3-phosphate acyltransferase 2 (530 aa).

3 helical membrane passes run 70–90, 93–113, and 275–295; these read YFMV…LLVL, FISL…SFFG, and LVLF…LVFG. The short motif at 339 to 344 is the HXXXXD motif element; sequence HRTLLD.

It belongs to the GPAT/DAPAT family. In terms of tissue distribution, weakly or not expressed in roots, leaves, seedlings, developing siliques and flower buds.

The protein resides in the membrane. It catalyses the reaction sn-glycerol 3-phosphate + an acyl-CoA = a 1-acyl-sn-glycero-3-phosphate + CoA. The protein operates within phospholipid metabolism; CDP-diacylglycerol biosynthesis; CDP-diacylglycerol from sn-glycerol 3-phosphate: step 1/3. Esterifies acyl-group from acyl-ACP to the sn-1 position of glycerol-3-phosphate, an essential step in glycerolipid biosynthesis. This is Probable glycerol-3-phosphate acyltransferase 2 (GPAT2) from Arabidopsis thaliana (Mouse-ear cress).